A 428-amino-acid polypeptide reads, in one-letter code: 3-phosphoshikimate 1-carboxyvinyltransferase (428 aa).

3 residues coordinate 3-phosphoshikimate: lysine 22, serine 23, and arginine 27. Lysine 22 provides a ligand contact to phosphoenolpyruvate. Residues glycine 96 and arginine 124 each coordinate phosphoenolpyruvate. 7 residues coordinate 3-phosphoshikimate: serine 170, serine 171, glutamine 172, serine 198, aspartate 314, asparagine 337, and lysine 341. Glutamine 172 contacts phosphoenolpyruvate. Residue aspartate 314 is the Proton acceptor of the active site. Phosphoenolpyruvate is bound by residues arginine 345, arginine 387, and lysine 412.

Belongs to the EPSP synthase family. Monomer.

The protein resides in the cytoplasm. It catalyses the reaction 3-phosphoshikimate + phosphoenolpyruvate = 5-O-(1-carboxyvinyl)-3-phosphoshikimate + phosphate. Its pathway is metabolic intermediate biosynthesis; chorismate biosynthesis; chorismate from D-erythrose 4-phosphate and phosphoenolpyruvate: step 6/7. Functionally, catalyzes the transfer of the enolpyruvyl moiety of phosphoenolpyruvate (PEP) to the 5-hydroxyl of shikimate-3-phosphate (S3P) to produce enolpyruvyl shikimate-3-phosphate and inorganic phosphate. The chain is 3-phosphoshikimate 1-carboxyvinyltransferase from Shewanella amazonensis (strain ATCC BAA-1098 / SB2B).